The primary structure comprises 927 residues: Protein translocase subunit SecA (927 aa).

ATP is bound by residues glutamine 86, 104-108, and aspartate 494; that span reads GEGKT. The tract at residues 853–927 is disordered; that stretch reads YTAPDEDGTP…GSKAKRGKRR (75 aa). Positions 860–879 are enriched in basic and acidic residues; that stretch reads GTPHAEVEAVDPGARERTSE. Over residues 907 to 927 the composition is skewed to basic residues; that stretch reads RAKRRGASARSGSKAKRGKRR.

The protein belongs to the SecA family. In terms of assembly, monomer and homodimer. Part of the essential Sec protein translocation apparatus which comprises SecA, SecYEG and auxiliary proteins SecDF. Other proteins may also be involved.

It localises to the cell membrane. It is found in the cytoplasm. It carries out the reaction ATP + H2O + cellular proteinSide 1 = ADP + phosphate + cellular proteinSide 2.. Part of the Sec protein translocase complex. Interacts with the SecYEG preprotein conducting channel. Has a central role in coupling the hydrolysis of ATP to the transfer of proteins into and across the cell membrane, serving as an ATP-driven molecular motor driving the stepwise translocation of polypeptide chains across the membrane. The chain is Protein translocase subunit SecA from Kocuria rhizophila (strain ATCC 9341 / DSM 348 / NBRC 103217 / DC2201).